We begin with the raw amino-acid sequence, 312 residues long: Glyoxylate/hydroxypyruvate reductase A (312 aa).

Residue Arg227 is part of the active site. His275 (proton donor) is an active-site residue.

Belongs to the D-isomer specific 2-hydroxyacid dehydrogenase family. GhrA subfamily.

It is found in the cytoplasm. The catalysed reaction is glycolate + NADP(+) = glyoxylate + NADPH + H(+). It catalyses the reaction (R)-glycerate + NAD(+) = 3-hydroxypyruvate + NADH + H(+). The enzyme catalyses (R)-glycerate + NADP(+) = 3-hydroxypyruvate + NADPH + H(+). Its function is as follows. Catalyzes the NADPH-dependent reduction of glyoxylate and hydroxypyruvate into glycolate and glycerate, respectively. This Escherichia coli (strain 55989 / EAEC) protein is Glyoxylate/hydroxypyruvate reductase A.